The chain runs to 425 residues: Serine hydroxymethyltransferase (425 aa).

Residues L122 and 126 to 128 (GHL) each bind (6S)-5,6,7,8-tetrahydrofolate. K231 carries the post-translational modification N6-(pyridoxal phosphate)lysine. 355-357 (SPF) lines the (6S)-5,6,7,8-tetrahydrofolate pocket.

It belongs to the SHMT family. As to quaternary structure, homodimer. It depends on pyridoxal 5'-phosphate as a cofactor.

It is found in the cytoplasm. It catalyses the reaction (6R)-5,10-methylene-5,6,7,8-tetrahydrofolate + glycine + H2O = (6S)-5,6,7,8-tetrahydrofolate + L-serine. Its pathway is one-carbon metabolism; tetrahydrofolate interconversion. The protein operates within amino-acid biosynthesis; glycine biosynthesis; glycine from L-serine: step 1/1. Its function is as follows. Catalyzes the reversible interconversion of serine and glycine with tetrahydrofolate (THF) serving as the one-carbon carrier. This reaction serves as the major source of one-carbon groups required for the biosynthesis of purines, thymidylate, methionine, and other important biomolecules. Also exhibits THF-independent aldolase activity toward beta-hydroxyamino acids, producing glycine and aldehydes, via a retro-aldol mechanism. The sequence is that of Serine hydroxymethyltransferase from Rippkaea orientalis (strain PCC 8801 / RF-1) (Cyanothece sp. (strain PCC 8801)).